Reading from the N-terminus, the 700-residue chain is uncharacterized protein (700 aa).

9 helical membrane passes run 24 to 44 (VLCLPVAVGLMLGELRFGLLF), 67 to 87 (LIIGASLFATCSLLTQLLLAK), 89 to 109 (VPLPFLLTGLTLVLGVTAELG), 115 to 135 (LLPASLLAAIFTLSLAGYMPV), 139 to 159 (LLIYALGTLWYGLFNWFWFWI), 383 to 403 (LMGTALHLPKSYWILMTVLLV), 420 to 440 (VGTVVGLIIAGVALHFKIPEG), 461 to 481 (YGWATVGFTITAVYTLQLLWL), and 491 to 511 (LIDTIIGCLIAFGGTVWLWPQ).

It belongs to the YccS/YhfK family.

Its subcellular location is the cell membrane. This is an uncharacterized protein from Escherichia coli (strain K12).